A 619-amino-acid chain; its full sequence is Probable serine/threonine-protein kinase WNK8 (619 aa).

Basic and acidic residues predominate over residues 1–14; it reads MSGARRCGDRRSER. The tract at residues 1–30 is disordered; the sequence is MSGARRCGDRRSERSSVVGDNRNGYVETDP. The 257-residue stretch at 35–291 folds into the Protein kinase domain; sequence GRLSEVLGKG…AEELLLDPFL (257 aa). ATP is bound by residues 115 to 118 and Lys163; that span reads TELF. Catalysis depends on Asp180, which acts as the Proton acceptor. 4 disordered regions span residues 293–335, 419–464, 508–555, and 585–619; these read PPQN…AKTT, YADD…PGPH, CSAS…SMVD, and GFRDPTTYGSSSSSSSSQHRRRSSSKVDHKHHYMF. The span at 419-428 shows a compositional bias: acidic residues; that stretch reads YADDDDDDDV. The segment covering 439–448 has biased composition (low complexity); the sequence is SSSPTSSQGS. Basic residues predominate over residues 602 to 619; sequence QHRRRSSSKVDHKHHYMF.

This sequence belongs to the protein kinase superfamily. Ser/Thr protein kinase family. WNK subfamily.

It catalyses the reaction L-seryl-[protein] + ATP = O-phospho-L-seryl-[protein] + ADP + H(+). The catalysed reaction is L-threonyl-[protein] + ATP = O-phospho-L-threonyl-[protein] + ADP + H(+). The chain is Probable serine/threonine-protein kinase WNK8 (WNK8) from Oryza sativa subsp. japonica (Rice).